The primary structure comprises 366 residues: D-alanine--D-alanine ligase A (366 aa).

Positions 145–348 constitute an ATP-grasp domain; it reads KRLLRDAGLK…YRELITALIE (204 aa). 175–230 is a binding site for ATP; that stretch reads VEQLGLPLFVKPANQGSSVGVSKVKREADLRAALDEAFRYDHKVLVEQAVIGREIE. Asp-302, Glu-315, and Asn-317 together coordinate Mg(2+).

The protein belongs to the D-alanine--D-alanine ligase family. Mg(2+) is required as a cofactor. Requires Mn(2+) as cofactor.

Its subcellular location is the cytoplasm. The enzyme catalyses 2 D-alanine + ATP = D-alanyl-D-alanine + ADP + phosphate + H(+). It participates in cell wall biogenesis; peptidoglycan biosynthesis. Functionally, cell wall formation. This is D-alanine--D-alanine ligase A from Chromobacterium violaceum (strain ATCC 12472 / DSM 30191 / JCM 1249 / CCUG 213 / NBRC 12614 / NCIMB 9131 / NCTC 9757 / MK).